The chain runs to 349 residues: MSTTAKEAPSSLFSLLPNDIVLNILARVPRWYHPILSCVSKNLRFLVSSSELKITRSLLEKDRFYVCFQEHSNSPSLTTYHWFSFTENRRCLVSIPFTSPVEPYFATLTLGPEIYFVGKSRSMWILDSRSGKLRQGPRPLVACDQAAVGLVNDKIYVFGGIDDMNKRYYEGIHAQVFDLKTQTWHVGPNLSVKLACLNRSVVTPSLGRKIYVRGTDRDVTIYDIKDGKCDKIIPADDFSSGDMCVVDNVIYMYYHNVGLMWYESKEKQWSVVHGLEFNGVFNSIAIAEYNGKLAFLWHDRNKREIWCAMINLYGSSKVAIRGRVEWSHRLLSDLPSNYNFKHFTICTDY.

The 48-residue stretch at 11 to 58 (SLFSLLPNDIVLNILARVPRWYHPILSCVSKNLRFLVSSSELKITRSL) folds into the F-box domain. One copy of the Kelch repeat lies at 154 to 204 (KIYVFGGIDDMNKRYYEGIHAQVFDLKTQTWHVGPNLSVKLACLNRSVVTP).

The protein is Putative F-box/kelch-repeat protein At4g02310 of Arabidopsis thaliana (Mouse-ear cress).